An 82-amino-acid chain; its full sequence is Sulfur carrier protein TusA (82 aa).

Cys19 serves as the catalytic Cysteine persulfide intermediate.

The protein belongs to the sulfur carrier protein TusA family.

The protein localises to the cytoplasm. Its function is as follows. Sulfur carrier protein which probably makes part of a sulfur-relay system. This Vibrio campbellii (strain ATCC BAA-1116) protein is Sulfur carrier protein TusA.